A 579-amino-acid chain; its full sequence is MNKSQEQVSFKDVCVDFTQEEWYLLDPAQKILYRDVILENYSNLVSVGYCITKPEVIFKIEQGEEPWILEKGFPSQCHPERKWKVDDVLESSQENEDDHFWELLFHNNKTVSVENGDRGSKTFNLGTDPVSLRNYPYKICDSCEMNLKNISGLIISKKNCSRKKPDEFNVCEKLLLDIRHEKIPIGEKSYKYDQKRNAINYHQDLSQPSFGQSFEYSKNGQGFHDEAAFFTNKRSQIGETVCKYNECGRTFIESLKLNISQRPHLEMEPYGCSICGKSFCMNLRFGHQRALTKDNPYEYNEYGEIFCDNSAFIIHQGAYTRKILREYKVSDKTWEKSALLKHQIVHMGGKSYDYNENGSNFSKKSHLTQLRRAHTGEKTFECGECGKTFWEKSNLTQHQRTHTGEKPYECTECGKAFCQKPHLTNHQRTHTGEKPYECKQCGKTFCVKSNLTEHQRTHTGEKPYECNACGKSFCHRSALTVHQRTHTGEKPFICNECGKSFCVKSNLIVHQRTHTGEKPYKCNECGKTFCEKSALTKHQRTHTGEKPYECNACGKTFSQRSVLTKHQRIHTRVKALSTS.

Residues 8–79 (VSFKDVCVDF…EKGFPSQCHP (72 aa)) form the KRAB domain. A C2H2-type 1; degenerate zinc finger spans residues 240–264 (TVCKYNECGRTFIESLKLNISQRPH). Residue K341 forms a Glycyl lysine isopeptide (Lys-Gly) (interchain with G-Cter in SUMO2) linkage. C2H2-type zinc fingers lie at residues 380-402 (FECGECGKTFWEKSNLTQHQRTH), 408-430 (YECTECGKAFCQKPHLTNHQRTH), 436-458 (YECKQCGKTFCVKSNLTEHQRTH), 464-486 (YECNACGKSFCHRSALTVHQRTH), 492-514 (FICNECGKSFCVKSNLIVHQRTH), 520-543 (YKCNECGKTFCEKSALTKHQRTHT), and 548-570 (YECNACGKTFSQRSVLTKHQRIH).

It belongs to the krueppel C2H2-type zinc-finger protein family.

Its subcellular location is the nucleus. In terms of biological role, may be involved in transcriptional regulation. The sequence is that of Zinc finger protein 248 (ZNF248) from Homo sapiens (Human).